We begin with the raw amino-acid sequence, 356 residues long: Golgi-resident adenosine 3',5'-bisphosphate 3'-phosphatase (356 aa).

M1 bears the N-acetylmethionine mark. Topologically, residues 1–12 are cytoplasmic; it reads MAPMGIRLSPLG. The chain crosses the membrane as a helical span at residues 13–33; that stretch reads VAVFFLLGLGVLYHLYSGFLA. Residues 34–356 lie on the Lumenal side of the membrane; it reads GRFSLFGLGG…KLPDLEKSGH (323 aa). The disordered stretch occupies residues 82 to 104; that stretch reads VRESNVLHEKSKGKTREGAEDKM. D108 functions as the Proton acceptor in the catalytic mechanism. Mg(2+)-binding residues include E131, D172, L174, and D175. T177 serves as the catalytic Proton acceptor. AMP contacts are provided by S240 and H243. N257 is a glycosylation site (N-linked (GlcNAc...) asparagine). Residues G266 and K270 each coordinate AMP. D298 serves as a coordination point for Mg(2+).

Belongs to the inositol monophosphatase superfamily. Requires Mg(2+) as cofactor. In terms of processing, contains N-linked glycan resistant to endoglycosydase H.

It is found in the golgi apparatus. It localises to the trans-Golgi network membrane. The enzyme catalyses adenosine 3',5'-bisphosphate + H2O = AMP + phosphate. It functions in the pathway sulfur metabolism. With respect to regulation, strongly inhibited by lithium. Its function is as follows. Exhibits 3'-nucleotidase activity toward adenosine 3',5'-bisphosphate (PAP), namely hydrolyzes adenosine 3',5'-bisphosphate into adenosine 5'-monophosphate (AMP) and a phosphate. May play a role in the formation of skeletal elements derived through endochondral ossification, possibly by clearing adenosine 3',5'-bisphosphate produced by Golgi sulfotransferases during glycosaminoglycan sulfation. Has no activity toward 3'-phosphoadenosine 5'-phosphosulfate (PAPS) or inositol phosphate (IP) substrates including I(1)P, I(1,4)P2, I(1,3,4)P3, I(1,4,5)P3 and I(1,3,4,5)P4. The chain is Golgi-resident adenosine 3',5'-bisphosphate 3'-phosphatase (Bpnt2) from Rattus norvegicus (Rat).